Reading from the N-terminus, the 469-residue chain is GDNF family receptor alpha-1 (469 aa).

Positions Met1–Gly27 are cleaved as a signal peptide. Tandem repeats lie at residues Asp28–Asn116, Lys149–Arg237, and Glu238–Ile341. The cysteines at positions 39 and 45 are disulfide-linked. Asn62 and Asn163 each carry an N-linked (GlcNAc...) asparagine glycan. Cystine bridges form between Cys153/Cys213, Cys160/Cys166, Cys177/Cys191, Cys186/Cys232, Cys215/Cys220, Cys242/Cys312, Cys249/Cys255, Cys266/Cys284, Cys276/Cys336, and Cys314/Cys324. N-linked (GlcNAc...) asparagine glycans are attached at residues Asn346 and Asn405. Residue Ser430 is the site of GPI-anchor amidated serine attachment. Residues His431–Leu469 constitute a propeptide, removed in mature form.

The protein belongs to the GDNFR family. As to quaternary structure, interacts with GDNF ligand and RET: forms a 2:2:2 ternary complex composed of GDNF ligand, GFRA1 and RET receptor.

The protein localises to the cell membrane. The protein resides in the golgi apparatus. It is found in the trans-Golgi network. It localises to the endosome. Its subcellular location is the multivesicular body. In terms of biological role, coreceptor for GDNF, a neurotrophic factor that enhances survival and morphological differentiation of dopaminergic neurons and increases their high-affinity dopamine uptake. GDNF-binding leads to autophosphorylation and activation of the RET receptor. This chain is GDNF family receptor alpha-1 (GFRA1), found in Gallus gallus (Chicken).